Here is a 206-residue protein sequence, read N- to C-terminus: Ion-translocating oxidoreductase complex subunit G (206 aa).

Residues 9-29 (GITLALFAAGSTGLTAVINQM) form a helical membrane-spanning segment. Residue Thr-174 is modified to FMN phosphoryl threonine.

The protein belongs to the RnfG family. The complex is composed of six subunits: RsxA, RsxB, RsxC, RsxD, RsxE and RsxG. FMN serves as cofactor.

The protein resides in the cell inner membrane. Its function is as follows. Part of a membrane-bound complex that couples electron transfer with translocation of ions across the membrane. Required to maintain the reduced state of SoxR. This Salmonella typhimurium (strain LT2 / SGSC1412 / ATCC 700720) protein is Ion-translocating oxidoreductase complex subunit G.